The primary structure comprises 125 residues: Small ribosomal subunit protein eS6 (125 aa).

The protein belongs to the eukaryotic ribosomal protein eS6 family.

In Pyrococcus horikoshii (strain ATCC 700860 / DSM 12428 / JCM 9974 / NBRC 100139 / OT-3), this protein is Small ribosomal subunit protein eS6.